Reading from the N-terminus, the 155-residue chain is 3-hydroxyacyl-[acyl-carrier-protein] dehydratase FabZ (155 aa).

Histidine 57 is an active-site residue.

Belongs to the thioester dehydratase family. FabZ subfamily.

The protein resides in the cytoplasm. It catalyses the reaction a (3R)-hydroxyacyl-[ACP] = a (2E)-enoyl-[ACP] + H2O. Involved in unsaturated fatty acids biosynthesis. Catalyzes the dehydration of short chain beta-hydroxyacyl-ACPs and long chain saturated and unsaturated beta-hydroxyacyl-ACPs. The chain is 3-hydroxyacyl-[acyl-carrier-protein] dehydratase FabZ from Cereibacter sphaeroides (strain ATCC 17025 / ATH 2.4.3) (Rhodobacter sphaeroides).